The chain runs to 280 residues: Cobalt import ATP-binding protein CbiO (280 aa).

Residues 2-236 (IEVRDLRFHY…GDWLRQQGLG (235 aa)) form the ABC transporter domain. 36–43 (GANGCGKT) contributes to the ATP binding site.

It belongs to the ABC transporter superfamily. Cobalt importer (TC 3.A.1.18.1) family. Forms an energy-coupling factor (ECF) transporter complex composed of an ATP-binding protein (A component, CbiO), a transmembrane protein (T component, CbiQ) and 2 possible substrate-capture proteins (S components, CbiM and CbiN) of unknown stoichimetry.

The protein resides in the cell inner membrane. It functions in the pathway cofactor biosynthesis; adenosylcobalamin biosynthesis. In terms of biological role, part of the energy-coupling factor (ECF) transporter complex CbiMNOQ involved in cobalt import. Presumably responsible for energy coupling to the transport system. The polypeptide is Cobalt import ATP-binding protein CbiO (Syntrophus aciditrophicus (strain SB)).